Consider the following 215-residue polypeptide: Probable nicotinate-nucleotide adenylyltransferase (215 aa).

It belongs to the NadD family.

It carries out the reaction nicotinate beta-D-ribonucleotide + ATP + H(+) = deamido-NAD(+) + diphosphate. Its pathway is cofactor biosynthesis; NAD(+) biosynthesis; deamido-NAD(+) from nicotinate D-ribonucleotide: step 1/1. Functionally, catalyzes the reversible adenylation of nicotinate mononucleotide (NaMN) to nicotinic acid adenine dinucleotide (NaAD). This Coxiella burnetii (strain RSA 331 / Henzerling II) protein is Probable nicotinate-nucleotide adenylyltransferase.